Reading from the N-terminus, the 566-residue chain is DNA ligase B (566 aa).

Residue K125 is the N6-AMP-lysine intermediate of the active site.

This sequence belongs to the NAD-dependent DNA ligase family. LigB subfamily.

The enzyme catalyses NAD(+) + (deoxyribonucleotide)n-3'-hydroxyl + 5'-phospho-(deoxyribonucleotide)m = (deoxyribonucleotide)n+m + AMP + beta-nicotinamide D-nucleotide.. Catalyzes the formation of phosphodiester linkages between 5'-phosphoryl and 3'-hydroxyl groups in double-stranded DNA using NAD as a coenzyme and as the energy source for the reaction. The protein is DNA ligase B of Pseudomonas putida (strain ATCC 47054 / DSM 6125 / CFBP 8728 / NCIMB 11950 / KT2440).